The chain runs to 507 residues: Protein O-glucosyltransferase 3 (507 aa).

A signal peptide spans 1 to 20 (MRRLPRALLLQLRLALLVAA). One copy of the Filamin repeat lies at 24 to 134 (EVLVSAPRSL…VAQSPYILKG (111 aa)). N-linked (GlcNAc...) asparagine glycans are attached at residues Asn61 and Asn306. Residues 504 to 507 (REEL) carry the Prevents secretion from ER motif.

This sequence belongs to the KDELC family.

Its subcellular location is the endoplasmic reticulum lumen. The catalysed reaction is L-seryl-[EGF-like domain protein] + UDP-alpha-D-glucose = 3-O-(beta-D-glucosyl)-L-seryl-[EGF-like domain protein] + UDP + H(+). The enzyme catalyses L-seryl-[EGF-like domain protein] + UDP-alpha-D-xylose = 3-O-(beta-D-xylosyl)-L-seryl-[EGF-like domain protein] + UDP + H(+). It functions in the pathway protein modification; protein glycosylation. In terms of biological role, protein glucosyltransferase that catalyzes the transfer of glucose from UDP-glucose to a serine residue within the consensus sequence peptide C-X-N-T-X-G-S-F-X-C. Can also catalyze the transfer of xylose from UDP-xylose but less efficiently. Specifically targets extracellular EGF repeats of proteins such as NOTCH1, NOTCH3, FBN1, FBN2 and LTBP1. May regulate the transport of NOTCH1 and NOTCH3 to the plasma membrane and thereby the Notch signaling pathway. The polypeptide is Protein O-glucosyltransferase 3 (Homo sapiens (Human)).